An 861-amino-acid polypeptide reads, in one-letter code: DNA mismatch repair protein MutS (861 aa).

614–621 (GPNMGGKS) is an ATP binding site.

This sequence belongs to the DNA mismatch repair MutS family.

Its function is as follows. This protein is involved in the repair of mismatches in DNA. It is possible that it carries out the mismatch recognition step. This protein has a weak ATPase activity. The sequence is that of DNA mismatch repair protein MutS from Mannheimia succiniciproducens (strain KCTC 0769BP / MBEL55E).